Reading from the N-terminus, the 589-residue chain is Cytochrome P450 monooxygenase TRI13 (589 aa).

An N-terminal signal peptide occupies residues 1–21 (MFLSLCLMVLALYLLYKWALP). N-linked (GlcNAc...) asparagine glycosylation is found at N52, N219, N243, and N366. C531 contributes to the heme binding site.

It belongs to the cytochrome P450 family. Heme is required as a cofactor.

It functions in the pathway sesquiterpene biosynthesis; trichothecene biosynthesis. Cytochrome P450 monooxygenase; part of the core gene cluster that mediates the biosynthesis of trichothecenes, a very large family of chemically related bicyclic sesquiterpene compounds acting as mycotoxins, including T2-toxin. The biosynthesis of trichothecenes begins with the cyclization of farnesyl diphosphate to trichodiene and is catalyzed by the trichodiene synthase TRI5. Trichodiene undergoes a series of oxygenations catalyzed by the cytochrome P450 monooxygenase TRI4. TRI4 controls the addition of four oxygens at C-2, C-3, C-11, and the C-12, C-13-epoxide to form the intermediate isotrichotriol. Isotrichotriol then undergoes a non-enzymatic isomerization and cyclization to form isotrichodermol. During this process, the oxygen at the C-2 position becomes the pyran ring oxygen and the hydroxyl group at C-11 is lost. More complex type A trichothecenes are built by modifying isotrichodermol through a series of paired hydroxylation and acetylation or acylation steps. Isotrichodermol is converted to isotrichodermin by the acetyltransferase TRI101. TRI101 encodes a C-3 transacetylase that acts as a self-protection or resistance factor during biosynthesis and that the presence of a free C-3 hydroxyl group is a key component of Fusarium trichothecene phytotoxicity. A second hydroxyl group is added to C-15 by the trichothecene C-15 hydroxylase TRI11, producing 15-decalonectrin, which is then acetylated by TRI3, producing calonectrin. A third hydroxyl group is added at C-4 by the cytochrome P450 monooxygenase TRI13, converting calonectrin to 3,15-diacetoxyspirpenol, which is subsequently acetylated by the acetyltransferase TRI7. A fourth hydroxyl group is added to C-8 by the cytochrome P450 monooxygenase TRI1, followed by the addition of an isovaleryl moiety by TRI16. Finally, the acetyl group is removed from the C-3 position by the trichothecene C-3 esterase TRI8 to produce T-2 toxin. The chain is Cytochrome P450 monooxygenase TRI13 from Fusarium sporotrichioides.